We begin with the raw amino-acid sequence, 454 residues long: LETM1 domain-containing protein YLH47, mitochondrial (454 aa).

Residues 1–45 constitute a mitochondrion transit peptide; the sequence is MLKYRSLPIKRAIHHPAPGITPISPRIMVSRLRVIPSFNLKFNRW. Residues 46 to 136 lie on the Mitochondrial intermembrane side of the membrane; sequence NSSVPESSKK…LKRTTQDIVR (91 aa). The segment at 51-73 is disordered; it reads ESSKKELKTTDGNQESASKVSPV. The helical transmembrane segment at 137–157 threads the bilayer; that stretch reads LVPFAAFLIIPFAELLLPFAL. At 158 to 454 the chain is on the mitochondrial matrix side; the sequence is KLFPNLLPST…IGEAAAIKEK (297 aa). The Letm1 RBD domain maps to 177-371; it reads KLENLRNTRK…LCDVLIGIPD (195 aa). Residues 376-423 adopt a coiled-coil conformation; sequence EVKVNVVKEDEASAKQKLKQLREQEEIMKEEEQQEENAIVSVKDELSL. 2 stretches are compositionally biased toward basic and acidic residues: residues 420 to 430 and 437 to 454; these read ELSLDDQDKNI and VKPH…IKEK. A disordered region spans residues 420–454; that stretch reads ELSLDDQDKNIDAAAPDVKPHDTKPIGEAAAIKEK.

Associates with the mitochondrial ribosomes.

The protein resides in the mitochondrion inner membrane. Involved in mitochondrial potassium homeostasis through the mitochondrial K(+)/H(+) exchange regulation. This chain is LETM1 domain-containing protein YLH47, mitochondrial (YLH47), found in Saccharomyces cerevisiae (strain ATCC 204508 / S288c) (Baker's yeast).